Reading from the N-terminus, the 218-residue chain is Adenylate kinase (218 aa).

10 to 15 (GAGKGT) contributes to the ATP binding site. The NMP stretch occupies residues 30-59 (STGDMLRAAIAKGTPLGLSAQKIMESGGLV). Residues Thr-31, Arg-36, 57-59 (GLV), 85-88 (GFPR), and Gln-92 each bind AMP. Residues 122–159 (GRRIHQPSGRVYHVVNQPPKNPGVDDITGEPLIQRDDD) are LID. ATP-binding positions include Arg-123 and 132–133 (VY). AMP is bound by residues Arg-156 and Arg-167. An ATP-binding site is contributed by Gly-203.

Belongs to the adenylate kinase family. In terms of assembly, monomer.

The protein localises to the cytoplasm. The catalysed reaction is AMP + ATP = 2 ADP. It functions in the pathway purine metabolism; AMP biosynthesis via salvage pathway; AMP from ADP: step 1/1. Its function is as follows. Catalyzes the reversible transfer of the terminal phosphate group between ATP and AMP. Plays an important role in cellular energy homeostasis and in adenine nucleotide metabolism. The polypeptide is Adenylate kinase (Legionella pneumophila (strain Corby)).